Here is a 908-residue protein sequence, read N- to C-terminus: Protein translocase subunit SecA (908 aa).

Residues Gln-90, 108–112 (GEGKT), and Asp-503 each bind ATP. The span at 846-864 (AAAAEAPVAPAPQPAAAAP) shows a compositional bias: low complexity. A disordered region spans residues 846 to 884 (AAAAEAPVAPAPQPAAAAPQPTPELVGAEAGEPDPAAWG). The Zn(2+) site is built by Cys-892, Cys-894, Cys-903, and His-904.

Belongs to the SecA family. In terms of assembly, monomer and homodimer. Part of the essential Sec protein translocation apparatus which comprises SecA, SecYEG and auxiliary proteins SecDF-YajC and YidC. It depends on Zn(2+) as a cofactor.

The protein resides in the cell inner membrane. It localises to the cytoplasm. It catalyses the reaction ATP + H2O + cellular proteinSide 1 = ADP + phosphate + cellular proteinSide 2.. Part of the Sec protein translocase complex. Interacts with the SecYEG preprotein conducting channel. Has a central role in coupling the hydrolysis of ATP to the transfer of proteins into and across the cell membrane, serving both as a receptor for the preprotein-SecB complex and as an ATP-driven molecular motor driving the stepwise translocation of polypeptide chains across the membrane. This is Protein translocase subunit SecA from Cereibacter sphaeroides (strain ATCC 17029 / ATH 2.4.9) (Rhodobacter sphaeroides).